A 221-amino-acid chain; its full sequence is Ribosomal RNA small subunit methyltransferase Nep1 (221 aa).

S-adenosyl-L-methionine contacts are provided by residues G174, G179, and 196 to 201; that span reads IGNVSL.

It belongs to the class IV-like SAM-binding methyltransferase superfamily. RNA methyltransferase NEP1 family. Homodimer.

The catalysed reaction is a pseudouridine in rRNA + S-adenosyl-L-methionine = an N(1)-methylpseudouridine in rRNA + S-adenosyl-L-homocysteine + H(+). Functionally, methyltransferase involved in ribosomal biogenesis. Specifically catalyzes the N1-methylation of the pseudouridine corresponding to position 914 in M.jannaschii 16S rRNA. This is Ribosomal RNA small subunit methyltransferase Nep1 from Pyrobaculum calidifontis (strain DSM 21063 / JCM 11548 / VA1).